Reading from the N-terminus, the 160-residue chain is Large ribosomal subunit protein eL29 (160 aa).

A compositionally biased stretch (basic residues) spans methionine 1–serine 26. 2 disordered regions span residues methionine 1 to glycine 34 and arginine 115 to proline 160. At lysine 5 the chain carries N6-methyllysine. Position 31 is a phosphoserine (serine 31). Position 33 is an N6-acetyllysine (lysine 33). Low complexity predominate over residues lysine 126 to proline 160. 2 consecutive repeat copies span residues alanine 127–lysine 134 and alanine 135–glutamine 142. The interval alanine 127–glutamine 142 is 2 X 8 AA tandem repeats of A-X-A-K-A-P-A-[KQ]. A Phosphoserine modification is found at serine 138. An N6-acetyllysine modification is found at lysine 145.

The protein belongs to the eukaryotic ribosomal protein eL29 family. As to quaternary structure, component of the large ribosomal subunit.

The protein resides in the cytoplasm. Its function is as follows. Component of the large ribosomal subunit. The ribosome is a large ribonucleoprotein complex responsible for the synthesis of proteins in the cell. In Mus musculus (Mouse), this protein is Large ribosomal subunit protein eL29 (Rpl29).